The primary structure comprises 176 residues: Urease accessory protein UreE (176 aa).

Residues F134 to Q176 are disordered. The span at H161–Q176 shows a compositional bias: basic and acidic residues.

It belongs to the UreE family.

The protein localises to the cytoplasm. In terms of biological role, involved in urease metallocenter assembly. Binds nickel. Probably functions as a nickel donor during metallocenter assembly. The sequence is that of Urease accessory protein UreE from Ruegeria sp. (strain TM1040) (Silicibacter sp.).